A 359-amino-acid chain; its full sequence is Methionine import ATP-binding protein MetN (359 aa).

The disordered stretch occupies residues 1-21; sequence MSTPASTPAPDGSHQRDHHPG. Residues 24 to 264 enclose the ABC transporter domain; that stretch reads VEFRGVTKVF…PQTTVAQRFV (241 aa). Residue 61–68 coordinates ATP; sequence GYSGAGKS.

This sequence belongs to the ABC transporter superfamily. Methionine importer (TC 3.A.1.24) family. The complex is composed of two ATP-binding proteins (MetN), two transmembrane proteins (MetI) and a solute-binding protein (MetQ).

Its subcellular location is the cell membrane. It carries out the reaction L-methionine(out) + ATP + H2O = L-methionine(in) + ADP + phosphate + H(+). It catalyses the reaction D-methionine(out) + ATP + H2O = D-methionine(in) + ADP + phosphate + H(+). Its function is as follows. Part of the ABC transporter complex MetNIQ involved in methionine import. Responsible for energy coupling to the transport system. This Corynebacterium efficiens (strain DSM 44549 / YS-314 / AJ 12310 / JCM 11189 / NBRC 100395) protein is Methionine import ATP-binding protein MetN.